A 41-amino-acid chain; its full sequence is Large ribosomal subunit protein bL36 (41 aa).

Belongs to the bacterial ribosomal protein bL36 family.

The sequence is that of Large ribosomal subunit protein bL36 (rpmJ) from Agrobacterium fabrum (strain C58 / ATCC 33970) (Agrobacterium tumefaciens (strain C58)).